Consider the following 78-residue polypeptide: Large ribosomal subunit protein bL28 (78 aa).

It belongs to the bacterial ribosomal protein bL28 family.

This Ruthia magnifica subsp. Calyptogena magnifica protein is Large ribosomal subunit protein bL28.